Here is a 372-residue protein sequence, read N- to C-terminus: CXADR-like membrane protein (372 aa).

A signal peptide spans Met1–Gly17. Ig-like C2-type domains lie at Thr18 to Lys126 and Pro134 to Thr223. At Thr18–Ala234 the chain is on the extracellular side. Disulfide bonds link Cys34-Cys110 and Cys152-Cys207. Asn73 and Asn196 each carry an N-linked (GlcNAc...) asparagine glycan. A helical transmembrane segment spans residues Gly235–Ile255. Residues Arg256 to Val372 are Cytoplasmic-facing. Positions Tyr263 to Arg280 are enriched in basic and acidic residues. Positions Tyr263–Val372 are disordered. Low complexity-rich tracts occupy residues Ser287–Ser313 and Leu352–Thr361. Over residues Met362–Val372 the composition is skewed to polar residues.

As to expression, predominantly expressed in the white adipose tissue.

The protein resides in the cell junction. It localises to the tight junction. The protein localises to the cell membrane. May be involved in the cell-cell adhesion. May play a role in adipocyte differentiation and development of obesity. Is required for normal small intestine development. This chain is CXADR-like membrane protein (Clmp), found in Rattus norvegicus (Rat).